Here is a 490-residue protein sequence, read N- to C-terminus: ATP synthase subunit alpha 1 (490 aa).

171–178 is an ATP binding site; sequence GDNGLGKS.

It belongs to the ATPase alpha/beta chains family. F-type ATPases have 2 components, CF(1) - the catalytic core - and CF(0) - the membrane proton channel. CF(1) has five subunits: alpha(3), beta(3), gamma(1), delta(1), epsilon(1). CF(0) has three main subunits: a(1), b(2) and c(9-12). The alpha and beta chains form an alternating ring which encloses part of the gamma chain. CF(1) is attached to CF(0) by a central stalk formed by the gamma and epsilon chains, while a peripheral stalk is formed by the delta and b chains.

The protein resides in the cell inner membrane. The catalysed reaction is ATP + H2O + 4 H(+)(in) = ADP + phosphate + 5 H(+)(out). Produces ATP from ADP in the presence of a proton gradient across the membrane. The alpha chain is a regulatory subunit. The sequence is that of ATP synthase subunit alpha 1 from Legionella pneumophila (strain Corby).